Here is a 372-residue protein sequence, read N- to C-terminus: Queuine tRNA-ribosyltransferase (372 aa).

The Proton acceptor role is filled by aspartate 92. Substrate contacts are provided by residues 92–96 (DSGGF), aspartate 146, glutamine 188, and glycine 215. Positions 246–252 (GIGTLRE) are RNA binding. Aspartate 265 acts as the Nucleophile in catalysis. The segment at 270 to 274 (TRLGR) is RNA binding; important for wobble base 34 recognition. Zn(2+) is bound by residues cysteine 303, cysteine 305, cysteine 308, and histidine 334.

The protein belongs to the queuine tRNA-ribosyltransferase family. In terms of assembly, homodimer. Within each dimer, one monomer is responsible for RNA recognition and catalysis, while the other monomer binds to the replacement base PreQ1. It depends on Zn(2+) as a cofactor.

It carries out the reaction 7-aminomethyl-7-carbaguanine + guanosine(34) in tRNA = 7-aminomethyl-7-carbaguanosine(34) in tRNA + guanine. Its pathway is tRNA modification; tRNA-queuosine biosynthesis. Its function is as follows. Catalyzes the base-exchange of a guanine (G) residue with the queuine precursor 7-aminomethyl-7-deazaguanine (PreQ1) at position 34 (anticodon wobble position) in tRNAs with GU(N) anticodons (tRNA-Asp, -Asn, -His and -Tyr). Catalysis occurs through a double-displacement mechanism. The nucleophile active site attacks the C1' of nucleotide 34 to detach the guanine base from the RNA, forming a covalent enzyme-RNA intermediate. The proton acceptor active site deprotonates the incoming PreQ1, allowing a nucleophilic attack on the C1' of the ribose to form the product. After dissociation, two additional enzymatic reactions on the tRNA convert PreQ1 to queuine (Q), resulting in the hypermodified nucleoside queuosine (7-(((4,5-cis-dihydroxy-2-cyclopenten-1-yl)amino)methyl)-7-deazaguanosine). The chain is Queuine tRNA-ribosyltransferase from Prochlorococcus marinus (strain MIT 9303).